The sequence spans 266 residues: Thymidylate synthase (266 aa).

Arginine 24 provides a ligand contact to dUMP. Histidine 54 contributes to the (6R)-5,10-methylene-5,6,7,8-tetrahydrofolate binding site. 129 to 130 (RR) contributes to the dUMP binding site. The Nucleophile role is filled by cysteine 149. DUMP is bound by residues 169–172 (RSAD), asparagine 180, and 210–212 (HIY). Aspartate 172 contacts (6R)-5,10-methylene-5,6,7,8-tetrahydrofolate. Alanine 265 is a binding site for (6R)-5,10-methylene-5,6,7,8-tetrahydrofolate.

Belongs to the thymidylate synthase family. Bacterial-type ThyA subfamily. As to quaternary structure, homodimer.

The protein resides in the cytoplasm. The catalysed reaction is dUMP + (6R)-5,10-methylene-5,6,7,8-tetrahydrofolate = 7,8-dihydrofolate + dTMP. It functions in the pathway pyrimidine metabolism; dTTP biosynthesis. Its function is as follows. Catalyzes the reductive methylation of 2'-deoxyuridine-5'-monophosphate (dUMP) to 2'-deoxythymidine-5'-monophosphate (dTMP) while utilizing 5,10-methylenetetrahydrofolate (mTHF) as the methyl donor and reductant in the reaction, yielding dihydrofolate (DHF) as a by-product. This enzymatic reaction provides an intracellular de novo source of dTMP, an essential precursor for DNA biosynthesis. This is Thymidylate synthase from Corynebacterium glutamicum (strain R).